Consider the following 350-residue polypeptide: Probable galactose-1-phosphate uridylyltransferase (350 aa).

Positions 31–52 (PWSGQQEKAQKNELPEFDPTNP) are disordered. C54 provides a ligand contact to Zn(2+). UDP-alpha-D-glucose is bound by residues 76–77 (ND) and N152. H163 is a binding site for Zn(2+). H165 functions as the Tele-UMP-histidine intermediate in the catalytic mechanism. Residues Q167, 314 to 317 (KFMV), and 319 to 320 (FE) contribute to the UDP-alpha-D-glucose site.

The protein belongs to the galactose-1-phosphate uridylyltransferase type 1 family. As to quaternary structure, homodimer. Zn(2+) serves as cofactor.

The catalysed reaction is alpha-D-galactose 1-phosphate + UDP-alpha-D-glucose = alpha-D-glucose 1-phosphate + UDP-alpha-D-galactose. The protein operates within carbohydrate metabolism; galactose metabolism. This Drosophila melanogaster (Fruit fly) protein is Probable galactose-1-phosphate uridylyltransferase (Galt).